Reading from the N-terminus, the 467-residue chain is Argininosuccinate lyase (467 aa).

This sequence belongs to the lyase 1 family. Argininosuccinate lyase subfamily.

It is found in the cytoplasm. It catalyses the reaction 2-(N(omega)-L-arginino)succinate = fumarate + L-arginine. It participates in amino-acid biosynthesis; L-arginine biosynthesis; L-arginine from L-ornithine and carbamoyl phosphate: step 3/3. The sequence is that of Argininosuccinate lyase from Anaeromyxobacter sp. (strain K).